The following is a 491-amino-acid chain: Cytochrome P450 2H2 (491 aa).

Heme is bound at residue Cys-436.

This sequence belongs to the cytochrome P450 family. Heme serves as cofactor.

The protein localises to the endoplasmic reticulum membrane. It is found in the microsome membrane. It carries out the reaction an organic molecule + reduced [NADPH--hemoprotein reductase] + O2 = an alcohol + oxidized [NADPH--hemoprotein reductase] + H2O + H(+). In terms of biological role, cytochromes P450 are a group of heme-thiolate monooxygenases. In liver microsomes, this enzyme is involved in an NADPH-dependent electron transport pathway. It oxidizes a variety of structurally unrelated compounds, including steroids, fatty acids, and xenobiotics. This is Cytochrome P450 2H2 (CYP2H2) from Gallus gallus (Chicken).